We begin with the raw amino-acid sequence, 335 residues long: Mitochondrial uncoupling protein 4C (335 aa).

3 Solcar repeats span residues 34–125 (RNLF…FRRP), 137–229 (LKIY…SKRT), and 238–329 (EGLP…LRQW). Helical transmembrane passes span 40–57 (YVNT…VFPL), 100–118 (GFSA…RVVL), 138–157 (KIYM…QALA), 204–223 (GVGP…VGSY), 244–264 (FVSS…ADVI), and 304–323 (GLMP…WLSV).

This sequence belongs to the mitochondrial carrier (TC 2.A.29) family.

The protein resides in the mitochondrion inner membrane. Mitochondrial protein that is likely to be responsible for thermogenic respiration. Likely to function in mitochondrial uncoupling i.e. creating mitochondrial proton leaks across the inner mitochondrial membrane and can therefore dissipate the mitochondrial proton gradient and convert the energy of substrate oxidation into heat instead of ATP. Involved in cold tolerance, it is required for development to the adult stage at low temperatures. This chain is Mitochondrial uncoupling protein 4C, found in Drosophila melanogaster (Fruit fly).